A 160-amino-acid polypeptide reads, in one-letter code: Small ribosomal subunit protein bS16 (160 aa).

The interval 115 to 139 (GGPTTEATRPKKKVSAKKAAKAVES) is disordered. A compositionally biased stretch (basic residues) spans 124–134 (PKKKVSAKKAA).

The protein belongs to the bacterial ribosomal protein bS16 family.

The chain is Small ribosomal subunit protein bS16 from Mycobacterium leprae (strain Br4923).